Reading from the N-terminus, the 755-residue chain is Elongation factor G, mitochondrial (755 aa).

The transit peptide at 1 to 38 (MFKRVGLIAGIAGPVAGSSRFSAVSFSKRAFSASSKRC) directs the protein to the mitochondrion. The tr-type G domain maps to 63 to 344 (KKLRNIGISA…AIVEYLPNPS (282 aa)). GTP is bound by residues 72–79 (AHIDSGKT), 143–147 (DTPGH), and 197–200 (NKMD).

The protein belongs to the TRAFAC class translation factor GTPase superfamily. Classic translation factor GTPase family. EF-G/EF-2 subfamily.

It localises to the mitochondrion. It participates in protein biosynthesis; polypeptide chain elongation. In terms of biological role, mitochondrial GTPase that catalyzes the GTP-dependent ribosomal translocation step during translation elongation. During this step, the ribosome changes from the pre-translocational (PRE) to the post-translocational (POST) state as the newly formed A-site-bound peptidyl-tRNA and P-site-bound deacylated tRNA move to the P and E sites, respectively. Catalyzes the coordinated movement of the two tRNA molecules, the mRNA and conformational changes in the ribosome. In Kluyveromyces lactis (strain ATCC 8585 / CBS 2359 / DSM 70799 / NBRC 1267 / NRRL Y-1140 / WM37) (Yeast), this protein is Elongation factor G, mitochondrial.